The primary structure comprises 283 residues: Shikimate dehydrogenase (NADP(+)) (283 aa).

Shikimate is bound by residues 18–20 (SYS) and threonine 66. The Proton acceptor role is filled by lysine 70. Asparagine 91 and aspartate 106 together coordinate shikimate. NADP(+) is bound by residues 130–134 (GAGGA) and methionine 225. Position 227 (tyrosine 227) interacts with shikimate. An NADP(+)-binding site is contributed by glycine 248.

This sequence belongs to the shikimate dehydrogenase family. Homodimer.

The enzyme catalyses shikimate + NADP(+) = 3-dehydroshikimate + NADPH + H(+). It participates in metabolic intermediate biosynthesis; chorismate biosynthesis; chorismate from D-erythrose 4-phosphate and phosphoenolpyruvate: step 4/7. Involved in the biosynthesis of the chorismate, which leads to the biosynthesis of aromatic amino acids. Catalyzes the reversible NADPH linked reduction of 3-dehydroshikimate (DHSA) to yield shikimate (SA). The sequence is that of Shikimate dehydrogenase (NADP(+)) from Pelodictyon phaeoclathratiforme (strain DSM 5477 / BU-1).